Consider the following 325-residue polypeptide: Elongation factor P--(R)-beta-lysine ligase (325 aa).

76–78 (SPE) lines the substrate pocket. Residues 100-102 (RNE) and asparagine 109 each bind ATP. Position 118 (tyrosine 118) interacts with substrate. 244–245 (EL) contacts ATP. Residue glutamate 251 coordinates substrate. Residue glycine 300 participates in ATP binding.

Belongs to the class-II aminoacyl-tRNA synthetase family. EpmA subfamily. In terms of assembly, homodimer.

It carries out the reaction D-beta-lysine + L-lysyl-[protein] + ATP = N(6)-((3R)-3,6-diaminohexanoyl)-L-lysyl-[protein] + AMP + diphosphate + H(+). Its function is as follows. With EpmB is involved in the beta-lysylation step of the post-translational modification of translation elongation factor P (EF-P). Catalyzes the ATP-dependent activation of (R)-beta-lysine produced by EpmB, forming a lysyl-adenylate, from which the beta-lysyl moiety is then transferred to the epsilon-amino group of a conserved specific lysine residue in EF-P. This is Elongation factor P--(R)-beta-lysine ligase from Citrobacter koseri (strain ATCC BAA-895 / CDC 4225-83 / SGSC4696).